The following is a 511-amino-acid chain: Cytochrome P450 monooxygenase prhD (511 aa).

An N-linked (GlcNAc...) asparagine glycan is attached at asparagine 7. A helical membrane pass occupies residues 10–30 (GNGMGLLIPLGLSWLIWTILL). Cysteine 444 is a heme binding site. Asparagine 502 carries N-linked (GlcNAc...) asparagine glycosylation.

The protein belongs to the cytochrome P450 family. The cofactor is heme.

The protein localises to the membrane. It participates in secondary metabolite biosynthesis; terpenoid biosynthesis. Its function is as follows. Cytochrome P450 monooxygenase; part of the gene cluster that mediates the biosynthesis of paraherquonin, a meroterpenoid with a unique, highly congested hexacyclic molecular architecture. The first step of the pathway is the synthesis of 3,5-dimethylorsellinic acid (DMOA) by the polyketide synthase prhL. Synthesis of DMOA is followed by farnesylation by the prenyltransferase prhE, methylesterification by the methyl-transferase prhM, epoxidation of the prenyl chain by the flavin-dependent monooxygenase prhF, and cyclization of the farnesyl moiety by the terpene cyclase prhH, to yield the tetracyclic intermediate, protoaustinoid A. The short chain dehydrogenase prhI then oxidizes the C-3 alcohol group of the terpene cyclase product to transform protoaustinoid A into protoaustinoid B. The FAD-binding monooxygenase prhJ catalyzes the oxidation of protoaustinoid B into preaustinoid A which is further oxidized into preaustinoid A1 by FAD-binding monooxygenase phrK. Finally, prhA leads to berkeleydione via the berkeleyone B intermediate. PrhA is a multifunctional dioxygenase that first desaturates at C5-C6 to form berkeleyone B, followed by rearrangement of the A/B-ring to form the cycloheptadiene moiety in berkeleydione. Berkeleydione serves as the key intermediate for the biosynthesis of paraherquonin as well as many other meroterpenoids. The cytochrome P450 monooxygenases prhB, prhD, and prhN, as well as the isomerase prhC, are probably involved in the late stage of paraherquonin biosynthesis, after the production of berkeleydione. Especially prhC might be a multifunctional enzyme that catalyzes the D-ring expansion via intramolecular methoxy rearrangement, as well as the hydrolysis of the expanded D-ring. This chain is Cytochrome P450 monooxygenase prhD, found in Penicillium brasilianum.